The primary structure comprises 273 residues: NADPH-dependent 7-cyano-7-deazaguanine reductase (273 aa).

Position 80-82 (Val-80–Ser-82) interacts with substrate. Ser-82–Lys-83 is an NADPH binding site. Cys-180 acts as the Thioimide intermediate in catalysis. Asp-187 (proton donor) is an active-site residue. A substrate-binding site is contributed by His-219 to Glu-220. Residue Arg-248–Gly-249 coordinates NADPH.

It belongs to the GTP cyclohydrolase I family. QueF type 2 subfamily. In terms of assembly, homodimer.

The protein resides in the cytoplasm. The enzyme catalyses 7-aminomethyl-7-carbaguanine + 2 NADP(+) = 7-cyano-7-deazaguanine + 2 NADPH + 3 H(+). It participates in tRNA modification; tRNA-queuosine biosynthesis. Catalyzes the NADPH-dependent reduction of 7-cyano-7-deazaguanine (preQ0) to 7-aminomethyl-7-deazaguanine (preQ1). The chain is NADPH-dependent 7-cyano-7-deazaguanine reductase from Bordetella pertussis (strain Tohama I / ATCC BAA-589 / NCTC 13251).